Consider the following 371-residue polypeptide: Putative HAD-like hydrolase Noc_2718 (371 aa).

Residues 1-288 (MKQKILLCSD…TGREESAEEE (288 aa)) form an HAD-like hydrolase region. The YcgL domain occupies 291-371 (QSCAIYRSCK…QLSSREYRRS (81 aa)).

It in the N-terminal section; belongs to the HAD-like hydrolase superfamily.

This chain is Putative HAD-like hydrolase Noc_2718, found in Nitrosococcus oceani (strain ATCC 19707 / BCRC 17464 / JCM 30415 / NCIMB 11848 / C-107).